The chain runs to 221 residues: MNNTVLILKNISKHYSQGKTIVRVLDDLNLTVNEGELIAIIGSSGSGKSTLLHIAGLLDKPTNGQVIIPNSKYQKYHLIRLHYLGFIYQQHHLLKDFTALENVIMPRLISGLDQKEAIEDATKILDDLGLGKKLYNMPGELSGGEQQRVAIARSLINKPKIILADEPTGNLDPKTTNEVFNLFLKVAREQNTAVIMVTHNHELAHKMDKLYKLKHGLLNIA.

Positions L6 to I220 constitute an ABC transporter domain. G42 to S49 is an ATP binding site.

Belongs to the ABC transporter superfamily. Lipoprotein translocase (TC 3.A.1.125) family. In terms of assembly, the complex is composed of two ATP-binding proteins (LolD) and two transmembrane proteins (LolC and LolE).

It localises to the cell inner membrane. Functionally, part of the ABC transporter complex LolCDE involved in the translocation of mature outer membrane-directed lipoproteins, from the inner membrane to the periplasmic chaperone, LolA. Responsible for the formation of the LolA-lipoprotein complex in an ATP-dependent manner. The polypeptide is Lipoprotein-releasing system ATP-binding protein LolD (Rickettsia felis (strain ATCC VR-1525 / URRWXCal2) (Rickettsia azadi)).